The sequence spans 1712 residues: Neurexin-2 (1712 aa).

The signal sequence occupies residues Met1–Gly28. Positions Leu29 to Cys206 constitute a Laminin G-like 1 domain. At Leu29–Thr1636 the chain is on the extracellular side. Residue Asn60 is glycosylated (N-linked (GlcNAc...) asparagine). The 41-residue stretch at Ala202–Ser242 folds into the EGF-like 1 domain. Intrachain disulfides connect Cys206–Cys219, Cys213–Cys229, and Cys231–Cys241. 2 Laminin G-like domains span residues Val289–Cys486 and Asp493–Cys686. Asp335 serves as a coordination point for Ca(2+). Asn338 carries an N-linked (GlcNAc...) asparagine glycan. Leu352 and Met420 together coordinate Ca(2+). 5 cysteine pairs are disulfide-bonded: Cys450–Cys486, Cys657–Cys686, Cys694–Cys705, Cys699–Cys714, and Cys716–Cys726. The region spanning Thr690 to Glu727 is the EGF-like 2 domain. Laminin G-like domains are found at residues Val732–Cys904 and Asp918–Cys1093. Positions 779 and 796 each coordinate Ca(2+). Asn841 carries N-linked (GlcNAc...) asparagine glycosylation. Ca(2+) is bound at residue Arg854. 4 disulfide bridges follow: Cys1065/Cys1093, Cys1100/Cys1111, Cys1105/Cys1120, and Cys1122/Cys1132. Positions Pro1096–Asn1133 constitute an EGF-like 3 domain. The Laminin G-like 6 domain occupies Thr1137–Ser1345. The Ca(2+) site is built by Asp1189 and Val1206. Asn1236 carries N-linked (GlcNAc...) asparagine glycosylation. Residues Ile1288 and Asn1290 each contribute to the Ca(2+) site. Residues Ala1373–Asn1392 are disordered. A glycan (O-linked (Xyl...) (heparan sulfate) serine) is linked at Ser1400. 2 disordered regions span residues Ala1458–Pro1489 and Thr1525–Val1626. The helical transmembrane segment at Gly1637 to Met1657 threads the bilayer. Over Tyr1658 to Val1712 the chain is Cytoplasmic. The tract at residues Asn1679–Val1712 is disordered.

It belongs to the neurexin family. In terms of assembly, the laminin G-like domain 1 binds to NXPH1. Interacts with PATJ. Interacts with CBLN1, CBLN2 and, less avidly, with CBLN4. Specific isoforms bind neuroligins NLGN1, NLGN2 and NLGN3. Specific isoforms bind to alpha-dystroglycan. Interacts (via Laminin G-like 1 domain) with IGSF21 (Ig-like 1 domain) in a trans-interaction manner. Interacts with CLSTN3. O-glycosylated; contains heparan sulfate. Heparan sulfate attachment is required for synapse development by mediating interactions with neuroligins. As to expression, predominantly expressed in brain.

The protein resides in the presynaptic cell membrane. In terms of biological role, neuronal cell surface protein that may be involved in cell recognition and cell adhesion. May mediate intracellular signaling. The protein is Neurexin-2 (NRXN2) of Homo sapiens (Human).